Reading from the N-terminus, the 176-residue chain is Peptidyl-prolyl cis-trans isomerase cyp5 (176 aa).

The PPIase cyclophilin-type domain maps to 10–173 (FFDVAVNGKP…AKVEIVDCGE (164 aa)).

This sequence belongs to the cyclophilin-type PPIase family.

The catalysed reaction is [protein]-peptidylproline (omega=180) = [protein]-peptidylproline (omega=0). Its function is as follows. PPIases accelerate the folding of proteins. It catalyzes the cis-trans isomerization of proline imidic peptide bonds in oligopeptides. This Rhizopus delemar (strain RA 99-880 / ATCC MYA-4621 / FGSC 9543 / NRRL 43880) (Mucormycosis agent) protein is Peptidyl-prolyl cis-trans isomerase cyp5 (cyp5).